Here is a 477-residue protein sequence, read N- to C-terminus: Probable glycine dehydrogenase (decarboxylating) subunit 2 (477 aa).

Lys264 is subject to N6-(pyridoxal phosphate)lysine.

This sequence belongs to the GcvP family. C-terminal subunit subfamily. The glycine cleavage system is composed of four proteins: P, T, L and H. In this organism, the P 'protein' is a heterodimer of two subunits. The cofactor is pyridoxal 5'-phosphate.

The enzyme catalyses N(6)-[(R)-lipoyl]-L-lysyl-[glycine-cleavage complex H protein] + glycine + H(+) = N(6)-[(R)-S(8)-aminomethyldihydrolipoyl]-L-lysyl-[glycine-cleavage complex H protein] + CO2. Its function is as follows. The glycine cleavage system catalyzes the degradation of glycine. The P protein binds the alpha-amino group of glycine through its pyridoxal phosphate cofactor; CO(2) is released and the remaining methylamine moiety is then transferred to the lipoamide cofactor of the H protein. This Fervidobacterium nodosum (strain ATCC 35602 / DSM 5306 / Rt17-B1) protein is Probable glycine dehydrogenase (decarboxylating) subunit 2.